The sequence spans 21 residues: Japonicin-2 (21 aa).

Cys-14 and Cys-21 form a disulfide bridge.

In terms of tissue distribution, expressed by the skin glands.

The protein localises to the secreted. In terms of biological role, antibacterial activity against the Gram-negative bacterium E.coli and the Gram-positive bacterium S.aureus. In Rana japonica (Japanese reddish frog), this protein is Japonicin-2.